Consider the following 209-residue polypeptide: Imidazole glycerol phosphate synthase subunit HisH (209 aa).

Residues 1–205 (MIAIIDYGMG…KGVVEAWKSS (205 aa)) enclose the Glutamine amidotransferase type-1 domain. Residue Cys79 is the Nucleophile of the active site. Active-site residues include His180 and Glu182.

Heterodimer of HisH and HisF.

It is found in the cytoplasm. The catalysed reaction is 5-[(5-phospho-1-deoxy-D-ribulos-1-ylimino)methylamino]-1-(5-phospho-beta-D-ribosyl)imidazole-4-carboxamide + L-glutamine = D-erythro-1-(imidazol-4-yl)glycerol 3-phosphate + 5-amino-1-(5-phospho-beta-D-ribosyl)imidazole-4-carboxamide + L-glutamate + H(+). It catalyses the reaction L-glutamine + H2O = L-glutamate + NH4(+). It functions in the pathway amino-acid biosynthesis; L-histidine biosynthesis; L-histidine from 5-phospho-alpha-D-ribose 1-diphosphate: step 5/9. Functionally, IGPS catalyzes the conversion of PRFAR and glutamine to IGP, AICAR and glutamate. The HisH subunit catalyzes the hydrolysis of glutamine to glutamate and ammonia as part of the synthesis of IGP and AICAR. The resulting ammonia molecule is channeled to the active site of HisF. The chain is Imidazole glycerol phosphate synthase subunit HisH from Bacillus mycoides (strain KBAB4) (Bacillus weihenstephanensis).